The primary structure comprises 467 residues: Fumarate hydratase class II (467 aa).

Residues 98 to 100 (SGT), arginine 126, 129 to 132 (HPND), 139 to 141 (SSN), and threonine 187 contribute to the substrate site. The Proton donor/acceptor role is filled by histidine 188. The active site involves serine 318. Substrate-binding positions include serine 319 and 324-326 (KVN).

This sequence belongs to the class-II fumarase/aspartase family. Fumarase subfamily. As to quaternary structure, homotetramer.

The protein resides in the cytoplasm. It carries out the reaction (S)-malate = fumarate + H2O. It functions in the pathway carbohydrate metabolism; tricarboxylic acid cycle; (S)-malate from fumarate: step 1/1. In terms of biological role, involved in the TCA cycle. Catalyzes the stereospecific interconversion of fumarate to L-malate. The sequence is that of Fumarate hydratase class II from Escherichia coli O6:H1 (strain CFT073 / ATCC 700928 / UPEC).